Reading from the N-terminus, the 341-residue chain is Elongation factor Ts (341 aa).

An involved in Mg(2+) ion dislocation from EF-Tu region spans residues 80–83 (TDFV).

Belongs to the EF-Ts family.

Its subcellular location is the cytoplasm. Functionally, associates with the EF-Tu.GDP complex and induces the exchange of GDP to GTP. It remains bound to the aminoacyl-tRNA.EF-Tu.GTP complex up to the GTP hydrolysis stage on the ribosome. In Lactobacillus helveticus (strain DPC 4571), this protein is Elongation factor Ts.